We begin with the raw amino-acid sequence, 78 residues long: Large ribosomal subunit protein bL28 (78 aa).

The protein belongs to the bacterial ribosomal protein bL28 family.

The protein is Large ribosomal subunit protein bL28 of Prochlorococcus marinus (strain MIT 9515).